The sequence spans 402 residues: MVAHSSEGLSATAPVTGGDVLVDARASLEEKEAPRDVNANTKQATTEEPRIQLPTVDAFRRAIPAHCFERDLVKSIRYLVQDFAALTILYFALPAFEYFGLFGYLVWNIFMGVFGFALFVVGHDCLHGSFSDNQNLNDFIGHIAFSPLFSPYFPWQKSHKLHHAFTNHIDKDHGHVWIQDKDWEAMPSWKRWFNPIPFSGWLKWFPVYTLFGFCDGSHFWPYSSLFVRNSERVQCVISGICCCVCAYIALTIAGSYSNWFWYYWVPLSFFGLMLVIVTYLQHVDDVAEVYEADEWSFVRGQTQTIDRYYGLGLDTTMHHITDGHVAHHFFNKIPHYHLIEATEGVKKVLEPLSDTQYGYKSQVNYDFFARFLWFNYKLDYLVHKTAGIMQFRTTLEEKAKAK.

Helical transmembrane passes span Leu79–Phe99, Leu101–Val121, Cys235–Ser255, and Phe260–Leu280.

It belongs to the fatty acid desaturase type 1 family.

It is found in the membrane. The catalysed reaction is (9Z,12Z)-octadecadienoyl-CoA + 2 Fe(II)-[cytochrome b5] + O2 + 2 H(+) = (9Z,12Z,15Z)-octadecatrienoyl-CoA + 2 Fe(III)-[cytochrome b5] + 2 H2O. The enzyme catalyses (8Z,11Z,14Z)-eicosatrienoyl-CoA + 2 Fe(II)-[cytochrome b5] + O2 + 2 H(+) = (8Z,11Z,14Z,17Z)-eicosatetraenoyl-CoA + 2 Fe(III)-[cytochrome b5] + 2 H2O. It carries out the reaction (5Z,8Z,11Z,14Z)-eicosatetraenoyl-CoA + 2 Fe(II)-[cytochrome b5] + O2 + 2 H(+) = (5Z,8Z,11Z,14Z,17Z)-eicosapentaenoyl-CoA + 2 Fe(III)-[cytochrome b5] + 2 H2O. It catalyses the reaction (7Z,10Z,13Z,16Z)-docosatetraenoyl-CoA + 2 Fe(II)-[cytochrome b5] + O2 + 2 H(+) = (7Z,10Z,13Z,16Z,19Z)-docosapentaenoyl-CoA + 2 Fe(III)-[cytochrome b5] + 2 H2O. The catalysed reaction is (6Z,9Z,12Z)-octadecatrienoyl-CoA + 2 Fe(II)-[cytochrome b5] + O2 + 2 H(+) = (6Z,9Z,12Z,15Z)-octadecatetraenoyl-CoA + 2 Fe(III)-[cytochrome b5] + 2 H2O. Its pathway is lipid metabolism; polyunsaturated fatty acid biosynthesis. Its function is as follows. Omega-3 fatty acid desaturase that recognizes a range of 18- and 20-carbon omega-6 substrates. Introduces a double bond in the fatty acid chain three carbons away from terminal methyl group to biosynthesize n-3 (omega-3) polyunsaturated fatty acids (PUFAs) endogenously (PUFAs are essential for membrane structure and many cellular and physiological processes). Acts on a number of substrates like linoleoyl-CoA ((9Z,12Z)-octadecadienoyl-CoA, 18:2n-6), dihomo-gamma-linolenoyl-CoA ((8Z,11Z,14Z)-eicosatrienoyl-CoA, 20:3n-6), and arachidonoyl-CoA ((5Z,8Z,11Z,14Z)-eicosatetraenoyl-CoA, 20:4n-6), to generate alpha-linolenoyl-CoA ((9Z,12Z,15Z)-octadecatrienoyl-CoA, 18:3n-3), (8Z,11Z,14Z,17Z)-eicosatetraenoyl-CoA (20:4n-3) and (5Z,8Z,11Z,14Z,17Z)-eicosapentaenoyl-CoA (20:5n-3) respectively. Unlike plants, Caenorhabditis elegans desaturases seem to use fatty acyl-CoAs as substrates. The polypeptide is Omega-3 fatty acid desaturase fat-1 (fat-1) (Caenorhabditis elegans).